Consider the following 291-residue polypeptide: 4-diphosphocytidyl-2-C-methyl-D-erythritol kinase (291 aa).

Residue K8 is part of the active site. 89–99 (PIGSGIGGGSS) is an ATP binding site. D131 is a catalytic residue.

It belongs to the GHMP kinase family. IspE subfamily.

It carries out the reaction 4-CDP-2-C-methyl-D-erythritol + ATP = 4-CDP-2-C-methyl-D-erythritol 2-phosphate + ADP + H(+). It functions in the pathway isoprenoid biosynthesis; isopentenyl diphosphate biosynthesis via DXP pathway; isopentenyl diphosphate from 1-deoxy-D-xylulose 5-phosphate: step 3/6. In terms of biological role, catalyzes the phosphorylation of the position 2 hydroxy group of 4-diphosphocytidyl-2C-methyl-D-erythritol. The polypeptide is 4-diphosphocytidyl-2-C-methyl-D-erythritol kinase (Chlamydia abortus (strain DSM 27085 / S26/3) (Chlamydophila abortus)).